A 138-amino-acid chain; its full sequence is Cysteine desulfuration protein SufE (138 aa).

Cys-51 functions as the Cysteine persulfide intermediate in the catalytic mechanism.

Belongs to the SufE family. In terms of assembly, homodimer. Interacts with SufS.

It localises to the cytoplasm. It functions in the pathway cofactor biosynthesis; iron-sulfur cluster biosynthesis. Participates in cysteine desulfuration mediated by SufS. Cysteine desulfuration mobilizes sulfur from L-cysteine to yield L-alanine and constitutes an essential step in sulfur metabolism for biosynthesis of a variety of sulfur-containing biomolecules. Functions as a sulfur acceptor for SufS, by mediating the direct transfer of the sulfur atom from the S-sulfanylcysteine of SufS, an intermediate product of cysteine desulfuration process. This Shigella sonnei (strain Ss046) protein is Cysteine desulfuration protein SufE.